Reading from the N-terminus, the 950-residue chain is Glycine dehydrogenase (decarboxylating) (950 aa).

Lysine 698 carries the N6-(pyridoxal phosphate)lysine modification.

This sequence belongs to the GcvP family. As to quaternary structure, the glycine cleavage system is composed of four proteins: P, T, L and H. Requires pyridoxal 5'-phosphate as cofactor.

The catalysed reaction is N(6)-[(R)-lipoyl]-L-lysyl-[glycine-cleavage complex H protein] + glycine + H(+) = N(6)-[(R)-S(8)-aminomethyldihydrolipoyl]-L-lysyl-[glycine-cleavage complex H protein] + CO2. Functionally, the glycine cleavage system catalyzes the degradation of glycine. The P protein binds the alpha-amino group of glycine through its pyridoxal phosphate cofactor; CO(2) is released and the remaining methylamine moiety is then transferred to the lipoamide cofactor of the H protein. This chain is Glycine dehydrogenase (decarboxylating), found in Neisseria meningitidis serogroup C (strain 053442).